A 166-amino-acid polypeptide reads, in one-letter code: Large ribosomal subunit protein uL10 (166 aa).

Belongs to the universal ribosomal protein uL10 family. In terms of assembly, part of the ribosomal stalk of the 50S ribosomal subunit. The N-terminus interacts with L11 and the large rRNA to form the base of the stalk. The C-terminus forms an elongated spine to which L12 dimers bind in a sequential fashion forming a multimeric L10(L12)X complex.

In terms of biological role, forms part of the ribosomal stalk, playing a central role in the interaction of the ribosome with GTP-bound translation factors. This chain is Large ribosomal subunit protein uL10, found in Streptococcus sanguinis (strain SK36).